We begin with the raw amino-acid sequence, 939 residues long: Isoleucine--tRNA ligase (939 aa).

A 'HIGH' region motif is present at residues 57–67 (PYANGHIHIGH). Glutamate 563 provides a ligand contact to L-isoleucyl-5'-AMP. The 'KMSKS' region motif lies at 604–608 (KMSKS). ATP is bound at residue lysine 607. Residues cysteine 903, cysteine 906, cysteine 921, and cysteine 924 each coordinate Zn(2+).

This sequence belongs to the class-I aminoacyl-tRNA synthetase family. IleS type 1 subfamily. As to quaternary structure, monomer. It depends on Zn(2+) as a cofactor.

Its subcellular location is the cytoplasm. The enzyme catalyses tRNA(Ile) + L-isoleucine + ATP = L-isoleucyl-tRNA(Ile) + AMP + diphosphate. Catalyzes the attachment of isoleucine to tRNA(Ile). As IleRS can inadvertently accommodate and process structurally similar amino acids such as valine, to avoid such errors it has two additional distinct tRNA(Ile)-dependent editing activities. One activity is designated as 'pretransfer' editing and involves the hydrolysis of activated Val-AMP. The other activity is designated 'posttransfer' editing and involves deacylation of mischarged Val-tRNA(Ile). In Sulfurihydrogenibium sp. (strain YO3AOP1), this protein is Isoleucine--tRNA ligase.